The chain runs to 313 residues: Aspartate carbamoyltransferase catalytic subunit (313 aa).

The carbamoyl phosphate site is built by arginine 58 and threonine 59. Lysine 86 serves as a coordination point for L-aspartate. Residues arginine 108, histidine 136, and glutamine 139 each contribute to the carbamoyl phosphate site. Positions 169 and 223 each coordinate L-aspartate. Residues glycine 264 and proline 265 each contribute to the carbamoyl phosphate site.

This sequence belongs to the aspartate/ornithine carbamoyltransferase superfamily. ATCase family. In terms of assembly, heterododecamer (2C3:3R2) of six catalytic PyrB chains organized as two trimers (C3), and six regulatory PyrI chains organized as three dimers (R2).

The enzyme catalyses carbamoyl phosphate + L-aspartate = N-carbamoyl-L-aspartate + phosphate + H(+). Its pathway is pyrimidine metabolism; UMP biosynthesis via de novo pathway; (S)-dihydroorotate from bicarbonate: step 2/3. Functionally, catalyzes the condensation of carbamoyl phosphate and aspartate to form carbamoyl aspartate and inorganic phosphate, the committed step in the de novo pyrimidine nucleotide biosynthesis pathway. The protein is Aspartate carbamoyltransferase catalytic subunit of Syntrophotalea carbinolica (strain DSM 2380 / NBRC 103641 / GraBd1) (Pelobacter carbinolicus).